We begin with the raw amino-acid sequence, 273 residues long: Dermonecrotic toxin LhSicTox-alphaIA2biv (273 aa).

Residue H5 is part of the active site. Positions 25 and 27 each coordinate Mg(2+). The active-site Nucleophile is H41. 2 disulfides stabilise this stretch: C45/C51 and C47/C190. D85 is a Mg(2+) binding site.

Belongs to the arthropod phospholipase D family. Class II subfamily. It depends on Mg(2+) as a cofactor. Expressed by the venom gland.

It localises to the secreted. It carries out the reaction an N-(acyl)-sphingosylphosphocholine = an N-(acyl)-sphingosyl-1,3-cyclic phosphate + choline. The catalysed reaction is an N-(acyl)-sphingosylphosphoethanolamine = an N-(acyl)-sphingosyl-1,3-cyclic phosphate + ethanolamine. The enzyme catalyses a 1-acyl-sn-glycero-3-phosphocholine = a 1-acyl-sn-glycero-2,3-cyclic phosphate + choline. It catalyses the reaction a 1-acyl-sn-glycero-3-phosphoethanolamine = a 1-acyl-sn-glycero-2,3-cyclic phosphate + ethanolamine. In terms of biological role, dermonecrotic toxins cleave the phosphodiester linkage between the phosphate and headgroup of certain phospholipids (sphingolipid and lysolipid substrates), forming an alcohol (often choline) and a cyclic phosphate. This toxin acts on sphingomyelin (SM). It may also act on ceramide phosphoethanolamine (CPE), lysophosphatidylcholine (LPC) and lysophosphatidylethanolamine (LPE), but not on lysophosphatidylserine (LPS), and lysophosphatidylglycerol (LPG). It acts by transphosphatidylation, releasing exclusively cyclic phosphate products as second products. Induces dermonecrosis, hemolysis, increased vascular permeability, edema, inflammatory response, and platelet aggregation. This is Dermonecrotic toxin LhSicTox-alphaIA2biv from Loxosceles hirsuta (Recluse spider).